A 435-amino-acid polypeptide reads, in one-letter code: Methylenetetrahydrofolate--tRNA-(uracil-5-)-methyltransferase TrmFO (435 aa).

Residue 9–14 (GAGLAG) coordinates FAD.

It belongs to the MnmG family. TrmFO subfamily. The cofactor is FAD.

It is found in the cytoplasm. It carries out the reaction uridine(54) in tRNA + (6R)-5,10-methylene-5,6,7,8-tetrahydrofolate + NADH + H(+) = 5-methyluridine(54) in tRNA + (6S)-5,6,7,8-tetrahydrofolate + NAD(+). The catalysed reaction is uridine(54) in tRNA + (6R)-5,10-methylene-5,6,7,8-tetrahydrofolate + NADPH + H(+) = 5-methyluridine(54) in tRNA + (6S)-5,6,7,8-tetrahydrofolate + NADP(+). Its function is as follows. Catalyzes the folate-dependent formation of 5-methyl-uridine at position 54 (M-5-U54) in all tRNAs. This Staphylococcus saprophyticus subsp. saprophyticus (strain ATCC 15305 / DSM 20229 / NCIMB 8711 / NCTC 7292 / S-41) protein is Methylenetetrahydrofolate--tRNA-(uracil-5-)-methyltransferase TrmFO.